A 355-amino-acid chain; its full sequence is UDP-glucose 4-epimerase uge1 (355 aa).

8 to 39 (TVLVTGGAGYIGSHTCVVLLEKGYDVVIVDNL) provides a ligand contact to NAD(+).

This sequence belongs to the NAD(P)-dependent epimerase/dehydratase family. NAD(+) serves as cofactor.

The catalysed reaction is UDP-alpha-D-glucose = UDP-alpha-D-galactose. Its pathway is carbohydrate metabolism; galactose metabolism. Its function is as follows. Major UDP-glucose/-galactose 4-epimerase under glucose-rich conditions involved in protein galactosylation. The sequence is that of UDP-glucose 4-epimerase uge1 (uge1) from Schizosaccharomyces pombe (strain 972 / ATCC 24843) (Fission yeast).